The primary structure comprises 611 residues: tRNA uridine 5-carboxymethylaminomethyl modification enzyme MnmG (611 aa).

Residues 8-13, Val120, and Ser175 each bind FAD; that span reads GAGHAG. 268–282 contributes to the NAD(+) binding site; that stretch reads GPRYCPSIEDKIVRF. Gln365 contributes to the FAD binding site.

This sequence belongs to the MnmG family. Homodimer. Heterotetramer of two MnmE and two MnmG subunits. The cofactor is FAD.

The protein resides in the cytoplasm. In terms of biological role, NAD-binding protein involved in the addition of a carboxymethylaminomethyl (cmnm) group at the wobble position (U34) of certain tRNAs, forming tRNA-cmnm(5)s(2)U34. The protein is tRNA uridine 5-carboxymethylaminomethyl modification enzyme MnmG of Mycoplasmoides gallisepticum (strain R(low / passage 15 / clone 2)) (Mycoplasma gallisepticum).